The sequence spans 121 residues: uncharacterized protein (121 aa).

This sequence to M.jannaschii MJ0017 and MJ1466.

This is an uncharacterized protein from Aquifex aeolicus (strain VF5).